Here is a 425-residue protein sequence, read N- to C-terminus: Serine--tRNA ligase (425 aa).

230–232 (TAE) contributes to the L-serine binding site. 261–263 (RSE) is an ATP binding site. Glu284 serves as a coordination point for L-serine. Position 348-351 (348-351 (EISS)) interacts with ATP. Residue Ser384 participates in L-serine binding.

This sequence belongs to the class-II aminoacyl-tRNA synthetase family. Type-1 seryl-tRNA synthetase subfamily. Homodimer. The tRNA molecule binds across the dimer.

The protein localises to the cytoplasm. The catalysed reaction is tRNA(Ser) + L-serine + ATP = L-seryl-tRNA(Ser) + AMP + diphosphate + H(+). The enzyme catalyses tRNA(Sec) + L-serine + ATP = L-seryl-tRNA(Sec) + AMP + diphosphate + H(+). It participates in aminoacyl-tRNA biosynthesis; selenocysteinyl-tRNA(Sec) biosynthesis; L-seryl-tRNA(Sec) from L-serine and tRNA(Sec): step 1/1. Its function is as follows. Catalyzes the attachment of serine to tRNA(Ser). Is also able to aminoacylate tRNA(Sec) with serine, to form the misacylated tRNA L-seryl-tRNA(Sec), which will be further converted into selenocysteinyl-tRNA(Sec). The chain is Serine--tRNA ligase from Streptococcus pyogenes serotype M28 (strain MGAS6180).